A 348-amino-acid chain; its full sequence is Selenide, water dikinase (348 aa).

Residue cysteine 17 is part of the active site. Residues lysine 20 and 48–50 (TRD) each bind ATP. Mg(2+) is bound at residue aspartate 51. ATP is bound by residues aspartate 68, aspartate 91, and 139 to 141 (GHS). Aspartate 91 provides a ligand contact to Mg(2+). Aspartate 227 lines the Mg(2+) pocket.

The protein belongs to the selenophosphate synthase 1 family. Class I subfamily. In terms of assembly, homodimer. Mg(2+) is required as a cofactor.

It carries out the reaction hydrogenselenide + ATP + H2O = selenophosphate + AMP + phosphate + 2 H(+). Its function is as follows. Synthesizes selenophosphate from selenide and ATP. The sequence is that of Selenide, water dikinase from Yersinia pseudotuberculosis serotype I (strain IP32953).